A 442-amino-acid chain; its full sequence is Probable carboxypeptidase PADG_04062 (442 aa).

The N-terminal stretch at Met-1–Ala-20 is a signal peptide. A glycan (N-linked (GlcNAc...) asparagine) is linked at Asn-102. Asp-160 is a binding site for Zn(2+). Glu-192 acts as the Proton acceptor in catalysis. A Zn(2+)-binding site is contributed by Glu-193. N-linked (GlcNAc...) asparagine glycosylation is present at Asn-343.

The protein belongs to the peptidase M20A family. It depends on Zn(2+) as a cofactor.

The protein resides in the secreted. This is Probable carboxypeptidase PADG_04062 from Paracoccidioides brasiliensis (strain Pb18).